A 122-amino-acid chain; its full sequence is Glycine cleavage system H protein (122 aa).

The region spanning 19–101 (VVTVGITNYA…EKEGWLWKMT (83 aa)) is the Lipoyl-binding domain. Lys-60 carries the N6-lipoyllysine modification.

Belongs to the GcvH family. The glycine cleavage system is composed of four proteins: P, T, L and H. It depends on (R)-lipoate as a cofactor.

Functionally, the glycine cleavage system catalyzes the degradation of glycine. The H protein shuttles the methylamine group of glycine from the P protein to the T protein. This chain is Glycine cleavage system H protein, found in Bartonella quintana (strain Toulouse) (Rochalimaea quintana).